A 276-amino-acid polypeptide reads, in one-letter code: Formamidopyrimidine-DNA glycosylase (276 aa).

The active-site Schiff-base intermediate with DNA is proline 2. Glutamate 3 (proton donor) is an active-site residue. Lysine 58 functions as the Proton donor; for beta-elimination activity in the catalytic mechanism. Residues histidine 92, arginine 111, and arginine 154 each coordinate DNA. An FPG-type zinc finger spans residues 239–273 (HAYQRTGDPCERCGTPIQRIVVGQRGTHFCPKCQV). The active-site Proton donor; for delta-elimination activity is the arginine 263.

The protein belongs to the FPG family. Monomer. It depends on Zn(2+) as a cofactor.

The catalysed reaction is Hydrolysis of DNA containing ring-opened 7-methylguanine residues, releasing 2,6-diamino-4-hydroxy-5-(N-methyl)formamidopyrimidine.. The enzyme catalyses 2'-deoxyribonucleotide-(2'-deoxyribose 5'-phosphate)-2'-deoxyribonucleotide-DNA = a 3'-end 2'-deoxyribonucleotide-(2,3-dehydro-2,3-deoxyribose 5'-phosphate)-DNA + a 5'-end 5'-phospho-2'-deoxyribonucleoside-DNA + H(+). Functionally, involved in base excision repair of DNA damaged by oxidation or by mutagenic agents. Acts as a DNA glycosylase that recognizes and removes damaged bases. Has a preference for oxidized purines, such as 7,8-dihydro-8-oxoguanine (8-oxoG). Has AP (apurinic/apyrimidinic) lyase activity and introduces nicks in the DNA strand. Cleaves the DNA backbone by beta-delta elimination to generate a single-strand break at the site of the removed base with both 3'- and 5'-phosphates. This chain is Formamidopyrimidine-DNA glycosylase, found in Ligilactobacillus salivarius (strain UCC118) (Lactobacillus salivarius).